Consider the following 152-residue polypeptide: Lipoprotein signal peptidase (152 aa).

The next 3 membrane-spanning stretches (helical) occupy residues 5 to 25 (LFVLSLILLVALDQLSKFWIV), 61 to 81 (WFFVVITVLVIGYAIYYLATH), and 84 to 104 (LNIWKQLALLLIISGGIGNFI). Residues Asp114 and Asp130 contribute to the active site. The helical transmembrane segment at 125-145 (IFNVADSYLTVGVILLVICLW) threads the bilayer.

It belongs to the peptidase A8 family.

The protein resides in the cell membrane. The catalysed reaction is Release of signal peptides from bacterial membrane prolipoproteins. Hydrolyzes -Xaa-Yaa-Zaa-|-(S,diacylglyceryl)Cys-, in which Xaa is hydrophobic (preferably Leu), and Yaa (Ala or Ser) and Zaa (Gly or Ala) have small, neutral side chains.. Its pathway is protein modification; lipoprotein biosynthesis (signal peptide cleavage). In terms of biological role, this protein specifically catalyzes the removal of signal peptides from prolipoproteins. The polypeptide is Lipoprotein signal peptidase (Streptococcus pyogenes serotype M3 (strain ATCC BAA-595 / MGAS315)).